Here is a 112-residue protein sequence, read N- to C-terminus: DNA-binding protein TK1278 (112 aa).

It belongs to the PDCD5 family.

In Thermococcus kodakarensis (strain ATCC BAA-918 / JCM 12380 / KOD1) (Pyrococcus kodakaraensis (strain KOD1)), this protein is DNA-binding protein TK1278.